The following is a 149-amino-acid chain: Large ribosomal subunit protein uL16c (149 aa).

It belongs to the universal ribosomal protein uL16 family. In terms of assembly, part of the 50S ribosomal subunit.

It is found in the plastid. The protein localises to the organellar chromatophore. This Paulinella chromatophora protein is Large ribosomal subunit protein uL16c (rpl16).